Consider the following 123-residue polypeptide: Small ribosomal subunit protein uS12 (123 aa).

The residue at position 89 (Asp-89) is a 3-methylthioaspartic acid.

Belongs to the universal ribosomal protein uS12 family. In terms of assembly, part of the 30S ribosomal subunit. Contacts proteins S8 and S17. May interact with IF1 in the 30S initiation complex.

Its function is as follows. With S4 and S5 plays an important role in translational accuracy. In terms of biological role, interacts with and stabilizes bases of the 16S rRNA that are involved in tRNA selection in the A site and with the mRNA backbone. Located at the interface of the 30S and 50S subunits, it traverses the body of the 30S subunit contacting proteins on the other side and probably holding the rRNA structure together. The combined cluster of proteins S8, S12 and S17 appears to hold together the shoulder and platform of the 30S subunit. This chain is Small ribosomal subunit protein uS12, found in Gluconacetobacter diazotrophicus (strain ATCC 49037 / DSM 5601 / CCUG 37298 / CIP 103539 / LMG 7603 / PAl5).